Here is a 353-residue protein sequence, read N- to C-terminus: Mitogen-activated protein kinase FUS3 (353 aa).

The Protein kinase domain occupies 13 to 309 (FQLKSLLGEG…AKEALEHPYL (297 aa)). ATP contacts are provided by residues 19–27 (LGEGAYGVV) and lysine 42. Residue aspartate 137 is the Proton acceptor of the active site. Threonine 180 is subject to Phosphothreonine. A TXY motif is present at residues 180 to 182 (TEY). Tyrosine 182 is subject to Phosphotyrosine. Lysine 345 participates in a covalent cross-link: Glycyl lysine isopeptide (Lys-Gly) (interchain with G-Cter in ubiquitin).

The protein belongs to the protein kinase superfamily. CMGC Ser/Thr protein kinase family. MAP kinase subfamily. In terms of assembly, in the nucleus, FUS3 forms a complex with DIG1, DIG2 and STE12. The interaction of FUS3 with STE12 depends on the presence of both DIG1 and DIG2. STE12 is lost from FUS3/DIG1/DIG2 complex after pheromone treatment. During its activation and phosphorylation, FUS3 forms a membrane-associated complex with the scaffold protein STE5, the MAPKK STE7, the MAPKKK STE11, and the G-protein beta subunit GBB/STE4; interacting directly with STE7 and STE5. Mg(2+) is required as a cofactor. Dually phosphorylated on Thr-180 and Tyr-182 by STE7 in response to pheromone induction, which activates the enzyme. Activated FUS3 initiates a feedback signal, down-regulating phosphorylation of both, FUS3 and KSS1.

It localises to the nucleus. It is found in the cytoplasm. The protein resides in the periplasm. It carries out the reaction L-seryl-[protein] + ATP = O-phospho-L-seryl-[protein] + ADP + H(+). The catalysed reaction is L-threonyl-[protein] + ATP = O-phospho-L-threonyl-[protein] + ADP + H(+). Activated by tyrosine and threonine phosphorylation after pheromone treatment. In terms of biological role, together with closely related KSS1, FUS3 is the final kinase in the signal transduction cascade regulating activation/repression of the mating and filamentation pathways, induced by pheromone and nitrogen/carbon limitation, respectively. Phosphorylated FUS3 activates the mating but suppresses the filamentation pathway, whereas activated KSS1 activates both pathways. Pheromone-activated FUS3 functions by inhibiting the binding of the transcriptional activator STE12 to filamentation specific genes while inducing its binding to and activity at mating specific genes. Non-activated FUS3 has a repressive effect on STE12 transcriptional activity. KSS1 can partially compensate for the lack of FUS3 but mating efficiency is reduced and the filamentation program is partially activated upon pheromone signaling. FUS3 phosphorylates STE7, STE5, FAR1, DIG1, DIG2 and STE12. The polypeptide is Mitogen-activated protein kinase FUS3 (FUS3) (Saccharomyces cerevisiae (strain ATCC 204508 / S288c) (Baker's yeast)).